The sequence spans 77 residues: Translation initiation factor IF-1, chloroplastic (77 aa).

The region spanning 1-71 (MKEQKLIHEG…TKGRIIYRLR (71 aa)) is the S1-like domain.

Belongs to the IF-1 family. In terms of assembly, component of the 30S ribosomal translation pre-initiation complex which assembles on the 30S ribosome in the order IF-2 and IF-3, IF-1 and N-formylmethionyl-tRNA(fMet); mRNA recruitment can occur at any time during PIC assembly.

It is found in the plastid. It localises to the chloroplast. Functionally, one of the essential components for the initiation of protein synthesis. Stabilizes the binding of IF-2 and IF-3 on the 30S subunit to which N-formylmethionyl-tRNA(fMet) subsequently binds. Helps modulate mRNA selection, yielding the 30S pre-initiation complex (PIC). Upon addition of the 50S ribosomal subunit IF-1, IF-2 and IF-3 are released leaving the mature 70S translation initiation complex. This Drimys granadensis protein is Translation initiation factor IF-1, chloroplastic.